Here is a 295-residue protein sequence, read N- to C-terminus: GTPase Era (295 aa).

Positions 7–176 (KTVSVCIIGR…ITSKAKIAPW (170 aa)) constitute an Era-type G domain. Residues 15 to 22 (GRPNSGKS) are G1. Residue 15 to 22 (GRPNSGKS) coordinates GTP. A G2 region spans residues 41 to 45 (QTTRS). Residues 62–65 (DTPG) are G3. Residues 62–66 (DTPGI) and 124–127 (NKIE) each bind GTP. A G4 region spans residues 124-127 (NKIE). A G5 region spans residues 152-154 (ISA). Positions 204 to 281 (LQQELPYKLT…HLFLFVKVRE (78 aa)) constitute a KH type-2 domain.

This sequence belongs to the TRAFAC class TrmE-Era-EngA-EngB-Septin-like GTPase superfamily. Era GTPase family. Monomer.

The protein resides in the cytoplasm. It is found in the cell inner membrane. In terms of biological role, an essential GTPase that binds both GDP and GTP, with rapid nucleotide exchange. Plays a role in 16S rRNA processing and 30S ribosomal subunit biogenesis and possibly also in cell cycle regulation and energy metabolism. The sequence is that of GTPase Era from Rickettsia canadensis (strain McKiel).